The following is a 342-amino-acid chain: UDP-3-O-acylglucosamine N-acyltransferase (342 aa).

Catalysis depends on histidine 253, which acts as the Proton acceptor.

It belongs to the transferase hexapeptide repeat family. LpxD subfamily. Homotrimer.

The enzyme catalyses a UDP-3-O-[(3R)-3-hydroxyacyl]-alpha-D-glucosamine + a (3R)-hydroxyacyl-[ACP] = a UDP-2-N,3-O-bis[(3R)-3-hydroxyacyl]-alpha-D-glucosamine + holo-[ACP] + H(+). It participates in bacterial outer membrane biogenesis; LPS lipid A biosynthesis. Its function is as follows. Catalyzes the N-acylation of UDP-3-O-acylglucosamine using 3-hydroxyacyl-ACP as the acyl donor. Is involved in the biosynthesis of lipid A, a phosphorylated glycolipid that anchors the lipopolysaccharide to the outer membrane of the cell. The polypeptide is UDP-3-O-acylglucosamine N-acyltransferase (Rickettsia bellii (strain RML369-C)).